A 140-amino-acid chain; its full sequence is uncharacterized protein (140 aa).

Tandem repeats lie at residues 1-10 (MFARLCPVSE), 11-20 (TFGRLCPVSE), 21-30 (TFARLCPVSE), 31-40 (TFARLCPVSE), 41-50 (TFARLCPVSE), 51-60 (TFGRLCPVSE), 61-70 (MFGRLSPVSE), 71-80 (TFGRLCPVSE), 81-90 (TFGRLCPVSE), 91-100 (MFARLCPVSE), 101-110 (TFGRLSPVSE), 111-120 (MFGRLCPVSE), 121-130 (MFGRLCPVSE), and 131-140 (MFGRLCPVIT). Residues 1–140 (MFARLCPVSE…MFGRLCPVIT (140 aa)) form a 14 X 10 AA tandem repeats of [MT]-F-[AG]-R-L-[CS]-P-V-[SI]-[ET] region.

This is an uncharacterized protein from Homo sapiens (Human).